We begin with the raw amino-acid sequence, 87 residues long: U14-lycotoxin-Ls1b (87 aa).

An N-terminal signal peptide occupies residues 1–20; that stretch reads MNSKVFVVLLLLALSTCVLS. In terms of domain architecture, WAP spans 21–66; sequence EKYCPTPRNTSCKKMNIRNNCCRDSDCTSNAFCCAEPCGNFCHKAS. Disulfide bonds link cysteine 24-cysteine 54, cysteine 32-cysteine 58, cysteine 41-cysteine 53, cysteine 42-cysteine 80, and cysteine 47-cysteine 62.

The protein belongs to the venom protein 11 family. 01 (wap-1) subfamily. Post-translationally, contains 5 disulfide bonds. Expressed by the venom gland.

Its subcellular location is the secreted. Functionally, has antibacterial activity. This Lycosa singoriensis (Wolf spider) protein is U14-lycotoxin-Ls1b.